A 92-amino-acid chain; its full sequence is Large ribosomal subunit protein bL34m (92 aa).

A mitochondrion-targeting transit peptide spans 1-46 (MALLAGSLLGPTSRSAALLGGRWLQPRAWLGFPDAWGLPTPQQARG). Over residues 40 to 57 (TPQQARGKSRGNEYQPSN) the composition is skewed to polar residues. Residues 40-63 (TPQQARGKSRGNEYQPSNIKRKNK) are disordered. Serine 71 bears the Phosphoserine mark.

This sequence belongs to the bacterial ribosomal protein bL34 family. In terms of assembly, component of the mitochondrial ribosome large subunit (39S) which comprises a 16S rRNA and about 50 distinct proteins.

The protein resides in the mitochondrion. This Macaca fascicularis (Crab-eating macaque) protein is Large ribosomal subunit protein bL34m (MRPL34).